The chain runs to 190 residues: NADH dehydrogenase [ubiquinone] iron-sulfur protein 3 (190 aa).

It belongs to the complex I 30 kDa subunit family. Complex I is composed of about 45 different subunits. This is a component of the iron-sulfur (IP) fragment of the enzyme.

It is found in the mitochondrion inner membrane. It catalyses the reaction a ubiquinone + NADH + 5 H(+)(in) = a ubiquinol + NAD(+) + 4 H(+)(out). Core subunit of the mitochondrial membrane respiratory chain NADH dehydrogenase (Complex I) that is believed to belong to the minimal assembly required for catalysis. Complex I functions in the transfer of electrons from NADH to the respiratory chain. The immediate electron acceptor for the enzyme is believed to be ubiquinone. This Solanum tuberosum (Potato) protein is NADH dehydrogenase [ubiquinone] iron-sulfur protein 3 (NAD9).